Consider the following 58-residue polypeptide: Large ribosomal subunit protein uL30 (58 aa).

This sequence belongs to the universal ribosomal protein uL30 family. Part of the 50S ribosomal subunit.

This is Large ribosomal subunit protein uL30 from Wigglesworthia glossinidia brevipalpis.